Reading from the N-terminus, the 136-residue chain is Small ribosomal subunit protein eS12 (136 aa).

It belongs to the eukaryotic ribosomal protein eS12 family.

The sequence is that of Small ribosomal subunit protein eS12 (rps12) from Dictyostelium discoideum (Social amoeba).